The primary structure comprises 89 residues: Small ribosomal subunit protein bS20 (89 aa).

A compositionally biased stretch (basic residues) spans 1–10 (MKNRSAIKRH). A disordered region spans residues 1–30 (MKNRSAIKRHNQSEVRRMRNRSAKSEVRTT). Residues 11–30 (NQSEVRRMRNRSAKSEVRTT) are compositionally biased toward basic and acidic residues.

The protein belongs to the bacterial ribosomal protein bS20 family.

Binds directly to 16S ribosomal RNA. This is Small ribosomal subunit protein bS20 from Treponema denticola (strain ATCC 35405 / DSM 14222 / CIP 103919 / JCM 8153 / KCTC 15104).